A 1033-amino-acid chain; its full sequence is Immunoglobulin superfamily member 2 (1033 aa).

The first 20 residues, 1-20 (MACILCVASLFLSLTKFSIG), serve as a signal peptide directing secretion. Residues 21 to 970 (QREVKIQEGP…VSSLICSSGP (950 aa)) are Extracellular-facing. Ig-like C2-type domains follow at residues 22-141 (REVK…TNLT), 144-266 (PDTL…TLIT), 279-388 (PAAR…TQMG), 408-529 (PAAR…QKIS), 539-657 (LRVN…ARVS), 670-797 (PESK…RKTS), and 806-941 (PTGS…KWIN). Cysteines 43 and 121 form a disulfide. A glycan (N-linked (GlcNAc...) asparagine) is linked at N139. The cysteines at positions 168 and 249 are disulfide-linked. The short motif at 253 to 255 (EWI) is the EWI motif element. 3 cysteine pairs are disulfide-bonded: C304–C377, C432–C509, and C560–C638. N677 is a glycosylation site (N-linked (GlcNAc...) asparagine). 2 disulfide bridges follow: C695/C776 and C832/C925. The chain crosses the membrane as a helical span at residues 971-991 (LLHFLIVCPFVMLLLLATSFL). Topologically, residues 992 to 1033 (CLYRKARKLSQLSLSAKKEKALWVGMRKTSLQKEAGEESGHY) are cytoplasmic.

Post-translationally, N-glycosylated.

The protein localises to the membrane. Plays a role as inhibitor of T-cells proliferation induced by CD3. Inhibits expression of IL2RA on activated T-cells and secretion of IL2. Inhibits tyrosine kinases that are required for IL2 production and cellular proliferation. Inhibits phospholipase C-gamma-1/PLCG1 phosphorylation and subsequent CD3-induced changes in intracellular free calcium. Prevents nuclear translocation of nuclear factor of activated T-cell to the nucleus. Plays a role in the inhibition of T-cell proliferation via IL10 secretion by cutaneous dendritic cells. The protein is Immunoglobulin superfamily member 2 (Cd101) of Mus musculus (Mouse).